A 194-amino-acid polypeptide reads, in one-letter code: RxLR effector protein Avh240 (194 aa).

The signal sequence occupies residues 1–23 (MRPYFTLLLALAFILACTNLVEA). A RxLR-dEER motif is present at residues 38-57 (RHLRTAVASVVDLPDDEDER). A host plasma membrane-binding region spans residues 58-108 (LLGYNTVQLWRMRRTANKLMNGKLTTQKEAALKKWMASQQDKFLAKWLKSS).

This sequence belongs to the RxLR effector family. Homodimer. Interacts with host soybean aspartic protease AP1.

It localises to the secreted. The protein resides in the host cell membrane. Effector that suppresses plant defense responses during the early stages of pathogen infection. Suppresses cell death induced by effectors and PAMPs in plant hosts. Avh240 dimerizes and localizes at the plasma membrane to interfere with aspartic protease AP1 secretion, which presents an effective mechanism by which effector proteins suppress plant apoplastic immunity. The chain is RxLR effector protein Avh240 from Phytophthora sojae (Soybean stem and root rot agent).